We begin with the raw amino-acid sequence, 390 residues long: Ribosomal RNA large subunit methyltransferase G (390 aa).

This sequence belongs to the methyltransferase superfamily. RlmG family.

The protein localises to the cytoplasm. The enzyme catalyses guanosine(1835) in 23S rRNA + S-adenosyl-L-methionine = N(2)-methylguanosine(1835) in 23S rRNA + S-adenosyl-L-homocysteine + H(+). Functionally, specifically methylates the guanine in position 1835 (m2G1835) of 23S rRNA. In Alcanivorax borkumensis (strain ATCC 700651 / DSM 11573 / NCIMB 13689 / SK2), this protein is Ribosomal RNA large subunit methyltransferase G.